A 410-amino-acid chain; its full sequence is Putative competence-damage inducible protein (410 aa).

This sequence belongs to the CinA family.

In Clostridium kluyveri (strain NBRC 12016), this protein is Putative competence-damage inducible protein.